Reading from the N-terminus, the 259-residue chain is DNA repair protein RecO (259 aa).

This sequence belongs to the RecO family.

Functionally, involved in DNA repair and RecF pathway recombination. The chain is DNA repair protein RecO from Rhizobium rhizogenes (strain K84 / ATCC BAA-868) (Agrobacterium radiobacter).